Reading from the N-terminus, the 212-residue chain is Leucyl/phenylalanyl-tRNA--protein transferase (212 aa).

The protein belongs to the L/F-transferase family.

The protein localises to the cytoplasm. It carries out the reaction N-terminal L-lysyl-[protein] + L-leucyl-tRNA(Leu) = N-terminal L-leucyl-L-lysyl-[protein] + tRNA(Leu) + H(+). It catalyses the reaction N-terminal L-arginyl-[protein] + L-leucyl-tRNA(Leu) = N-terminal L-leucyl-L-arginyl-[protein] + tRNA(Leu) + H(+). The enzyme catalyses L-phenylalanyl-tRNA(Phe) + an N-terminal L-alpha-aminoacyl-[protein] = an N-terminal L-phenylalanyl-L-alpha-aminoacyl-[protein] + tRNA(Phe). Functions in the N-end rule pathway of protein degradation where it conjugates Leu, Phe and, less efficiently, Met from aminoacyl-tRNAs to the N-termini of proteins containing an N-terminal arginine or lysine. This is Leucyl/phenylalanyl-tRNA--protein transferase from Christiangramia forsetii (strain DSM 17595 / CGMCC 1.15422 / KT0803) (Gramella forsetii).